An 817-amino-acid chain; its full sequence is Leucine--tRNA ligase (817 aa).

A 'HIGH' region motif is present at residues 40-50; that stretch reads PYPSGKLHMGH. A 'KMSKS' region motif is present at residues 578-582; that stretch reads KMSKS. Lys581 is a binding site for ATP.

The protein belongs to the class-I aminoacyl-tRNA synthetase family.

The protein resides in the cytoplasm. The catalysed reaction is tRNA(Leu) + L-leucine + ATP = L-leucyl-tRNA(Leu) + AMP + diphosphate. The protein is Leucine--tRNA ligase of Caldicellulosiruptor saccharolyticus (strain ATCC 43494 / DSM 8903 / Tp8T 6331).